The following is a 95-amino-acid chain: Protein YY1 (95 aa).

An N-terminal signal peptide occupies residues 1 to 26 (MAVTRTALLVVLVAGAMTMTMRGAEA). Disulfide bonds link Cys31/Cys72, Cys41/Cys61, Cys62/Cys87, and Cys74/Cys94.

Belongs to the A9/FIL1 family. Anther.

Its subcellular location is the secreted. This Oryza sativa subsp. japonica (Rice) protein is Protein YY1.